The sequence spans 296 residues: SPbeta prophage-derived endonuclease YokF (296 aa).

The N-terminal stretch at 1–19 is a signal peptide; the sequence is MKKVLLGFAAFTLSLSLAA. The N-palmitoyl cysteine moiety is linked to residue C20. Residue C20 is the site of S-diacylglycerol cysteine attachment. The segment at 20-65 is disordered; sequence CSSNDSEKVSTEKETPQASTDVEKKTEQKESTKEKTADKSKEKDKK. Basic and acidic residues predominate over residues 24–65; that stretch reads DSEKVSTEKETPQASTDVEKKTEQKESTKEKTADKSKEKDKK. Positions 66–199 constitute a TNase-like domain; sequence ELVDVTLDRA…KSEKLSIWSK (134 aa). D79 contacts Ca(2+). R93 is a catalytic residue. Positions 98 and 99 each coordinate Ca(2+). Residues E101 and R144 contribute to the active site. The segment at 218–296 is disordered; that stretch reads AVKKATTSKP…RDHDNYACER (79 aa). The span at 219 to 244 shows a compositional bias: low complexity; that stretch reads VKKATTSKPAATQPTTPKASSETSTT. The span at 284 to 296 shows a compositional bias: basic and acidic residues; it reads KMDRDHDNYACER.

Requires Ca(2+) as cofactor. Cu(2+) serves as cofactor. It depends on Mn(2+) as a cofactor.

It is found in the cell membrane. Inhibited by aurintricalboxylic acid but not by Zn(2+), Mn(2+), Hg(2+), 2-mercaptoethanol and sodium citrate. Neither inhibited nor activated by ATP. In terms of biological role, catalyzes the hydrolysis of supercoiled double and single strand DNA and RNA. Involved in chromosomal DNA degradation and cell death caused by thermal stress. This chain is SPbeta prophage-derived endonuclease YokF (yokF), found in Bacillus subtilis (strain 168).